Here is a 380-residue protein sequence, read N- to C-terminus: Erythronate-4-phosphate dehydrogenase (380 aa).

Substrate is bound by residues Ser45 and Thr66. NAD(+) is bound by residues 126-127 (QV), Asp146, Thr174, 205-207 (ASR), and Asp231. The active site involves Arg207. Residue Glu236 is part of the active site. The active-site Proton donor is the His253. Gly256 is a binding site for NAD(+). A substrate-binding site is contributed by Tyr257.

The protein belongs to the D-isomer specific 2-hydroxyacid dehydrogenase family. PdxB subfamily. As to quaternary structure, homodimer.

The protein resides in the cytoplasm. It carries out the reaction 4-phospho-D-erythronate + NAD(+) = (R)-3-hydroxy-2-oxo-4-phosphooxybutanoate + NADH + H(+). The protein operates within cofactor biosynthesis; pyridoxine 5'-phosphate biosynthesis; pyridoxine 5'-phosphate from D-erythrose 4-phosphate: step 2/5. Catalyzes the oxidation of erythronate-4-phosphate to 3-hydroxy-2-oxo-4-phosphonooxybutanoate. This chain is Erythronate-4-phosphate dehydrogenase, found in Azotobacter vinelandii (strain DJ / ATCC BAA-1303).